The primary structure comprises 292 residues: MQPLNMAEILDHRGVLTDGDDGPFRNLTNFYDMFSSNFPEGLRVLVFDEDPSYLLILERHLQKFQYQVTICNEVNKAMHTLRNHRNRFDLAMIQVNNAEGDIFRFLSEIGSEMDLPIIIISEDDSVKSVKKWMINGAADYLIKPIRPEDLRIVFKHLVKKMRERRSVVTGEAEKAAGEKSSSVGDSTIRNPNKSKRSSCLEAEVNEEDRHDHNDRACASSAKKRRVVWDEELHQNFLNAVDFLGLERAVPKKILDVMKVDYISRENVASHLQVTFLIYNIIVHFQQHFCFYS.

Positions 43–158 (RVLVFDEDPS…DLRIVFKHLV (116 aa)) constitute a Response regulatory domain. A disordered region spans residues 168 to 215 (VTGEAEKAAGEKSSSVGDSTIRNPNKSKRSSCLEAEVNEEDRHDHNDR). The segment covering 179-191 (KSSSVGDSTIRNP) has biased composition (polar residues). The segment at residues 225–275 (RVVWDEELHQNFLNAVDFLGLERAVPKKILDVMKVDYISRENVASHLQVTF) is a DNA-binding region (myb-like GARP).

The protein belongs to the ARR-like family. Binds the target DNA as a monomer.

It is found in the nucleus. Functionally, transcriptional activator that binds specifically to the DNA sequence 5'-[AG]GATT-3'. This is Putative two-component response regulator-like APRR4 (APRR4) from Arabidopsis thaliana (Mouse-ear cress).